Reading from the N-terminus, the 380-residue chain is Putative zinc finger protein C02F5.12 (380 aa).

The tract at residues 137-187 (NLDIPGTSSDIPSDPSSALKVPKKEVLDESEEILDQTSGSSSFSLNDSEQA) is disordered. 2 stretches are compositionally biased toward polar residues: residues 142–152 (GTSSDIPSDPS) and 171–187 (DQTS…SEQA). The C2H2-type zinc-finger motif lies at 271-294 (IPCKLCGFECTNVRRMRSHYAKAH).

It localises to the nucleus. The sequence is that of Putative zinc finger protein C02F5.12 from Caenorhabditis elegans.